The chain runs to 425 residues: GTPase Obg (425 aa).

An Obg domain is found at 1–158; sequence MFRDSAKIYV…YSLILEMKMI (158 aa). Residues 159-330 enclose the OBG-type G domain; that stretch reads ADVGLVGYPN…LLYAVSETLK (172 aa). Residues 165–172, 190–194, 212–215, 282–285, and 311–313 each bind GTP; these read GYPNVGKS, FTTLV, DIPG, NKMD, and SAA. Residues Ser-172 and Thr-192 each coordinate Mg(2+). In terms of domain architecture, OCT spans 348-425; it reads YKVQEEKPFE…IYDTEFDYTR (78 aa).

This sequence belongs to the TRAFAC class OBG-HflX-like GTPase superfamily. OBG GTPase family. As to quaternary structure, monomer. Requires Mg(2+) as cofactor.

The protein resides in the cytoplasm. Its function is as follows. An essential GTPase which binds GTP, GDP and possibly (p)ppGpp with moderate affinity, with high nucleotide exchange rates and a fairly low GTP hydrolysis rate. Plays a role in control of the cell cycle, stress response, ribosome biogenesis and in those bacteria that undergo differentiation, in morphogenesis control. This chain is GTPase Obg, found in Ruminiclostridium cellulolyticum (strain ATCC 35319 / DSM 5812 / JCM 6584 / H10) (Clostridium cellulolyticum).